Here is a 37-residue protein sequence, read N- to C-terminus: Small ribosomal subunit protein eS32 (37 aa).

It belongs to the eukaryotic ribosomal protein eS32 family. As to quaternary structure, part of the small ribosomal subunit.

Interacts with N(4)-acetylcytidine (ac(4)C) 1459 of the small rRNA; the acetyl group of ac(4)C1459 briges the interaction with this protein. The polypeptide is Small ribosomal subunit protein eS32 (rpl41e) (Thermococcus kodakarensis (strain ATCC BAA-918 / JCM 12380 / KOD1) (Pyrococcus kodakaraensis (strain KOD1))).